The sequence spans 328 residues: Neuronal membrane glycoprotein M6-b (328 aa).

The disordered stretch occupies residues 1-22; that stretch reads MKPAMETAAEENTEQSQERKVN. A helical membrane pass occupies residues 71-91; the sequence is GGVPYASLVATILCFSGVALF. Residue Asn113 is glycosylated (N-linked (GlcNAc...) asparagine). A run of 2 helical transmembrane segments spans residues 130-150 and 176-196; these read VIYG…AEGF and FVFL…FSAV. A glycan (N-linked (GlcNAc...) asparagine) is linked at Asn217. Residues 265-285 form a helical membrane-spanning segment; sequence FIVACAGAGATVIALIHFLMI. Residues Ser318, Ser320, and Ser326 each carry the phosphoserine modification.

It belongs to the myelin proteolipid protein family. Interacts with SERT. Widely expressed. In the brain, expressed in neurons and oligodendrocytes.

It localises to the membrane. It is found in the cell membrane. Functionally, may be involved in neural development. Involved in regulation of osteoblast function and bone formation. Involved in matrix vesicle release by osteoblasts; this function seems to involve maintenance of the actin cytoskeleton. May be involved in cellular trafficking of SERT and thereby in regulation of serotonin uptake. The protein is Neuronal membrane glycoprotein M6-b (Gpm6b) of Mus musculus (Mouse).